The primary structure comprises 232 residues: MHNWKGVWLCSLFLTFGQLWNGILLAYPLDCKDEQGSYTRCTSISLEKLLDRAIQHAELLYRVSEESCTIFEDNFAPFSLVSQRSRNFNSCYTKGLRLPSSKSEAQQVSDKWLLHSVLVLVQSWIEPFVYLQRTLDTYNSLPGSLVNKTKWVSDKLPSLEQGIVVLIRKMLHEGLITTDFQQSVIEIEPSPEITDSSARDYMILNCFRKDAHKMETFLKLLKCRQIKKLNCY.

An N-terminal signal peptide occupies residues 1-16 (MHNWKGVWLCSLFLTF). Cystine bridges form between C31–C41, C91–C206, and C223–C231. N-linked (GlcNAc...) asparagine glycosylation occurs at N147.

This sequence belongs to the somatotropin/prolactin family. Pituitary gland.

The protein resides in the secreted. The polypeptide is Somatolactin (Protopterus annectens (African lungfish)).